The following is a 328-amino-acid chain: D-cysteine desulfhydrase (328 aa).

The residue at position 51 (Lys-51) is an N6-(pyridoxal phosphate)lysine.

It belongs to the ACC deaminase/D-cysteine desulfhydrase family. As to quaternary structure, homodimer. The cofactor is pyridoxal 5'-phosphate.

The catalysed reaction is D-cysteine + H2O = hydrogen sulfide + pyruvate + NH4(+) + H(+). In terms of biological role, catalyzes the alpha,beta-elimination reaction of D-cysteine and of several D-cysteine derivatives. It could be a defense mechanism against D-cysteine. The chain is D-cysteine desulfhydrase from Escherichia coli (strain SMS-3-5 / SECEC).